Here is a 120-residue protein sequence, read N- to C-terminus: Flagellar protein FliT (120 aa).

A required for homodimerization region spans residues 1–50; it reads MERHQHLLSEYQQILTLSEQMLMLATVENWNALVDLEMTYLKAVENTANI. Residues 60–98 are fliD binding; the sequence is LQELLRQKLRSILENEIEIKRLLQRRLDKLSELVGQSTR.

It belongs to the FliT family. In terms of assembly, homodimer. Interacts with FliD and FlhC.

Its subcellular location is the cytoplasm. The protein resides in the cytosol. Dual-function protein that regulates the transcription of class 2 flagellar operons and that also acts as an export chaperone for the filament-capping protein FliD. As a transcriptional regulator, acts as an anti-FlhDC factor; it directly binds FlhC, thus inhibiting the binding of the FlhC/FlhD complex to class 2 promoters, resulting in decreased expression of class 2 flagellar operons. As a chaperone, effects FliD transition to the membrane by preventing its premature polymerization, and by directing it to the export apparatus. In Yersinia pestis bv. Antiqua (strain Antiqua), this protein is Flagellar protein FliT.